We begin with the raw amino-acid sequence, 181 residues long: ATP-dependent protease subunit HslV (181 aa).

Threonine 7 is a catalytic residue. Na(+)-binding residues include glycine 166, cysteine 169, and threonine 172.

It belongs to the peptidase T1B family. HslV subfamily. As to quaternary structure, a double ring-shaped homohexamer of HslV is capped on each side by a ring-shaped HslU homohexamer. The assembly of the HslU/HslV complex is dependent on binding of ATP.

It localises to the cytoplasm. It carries out the reaction ATP-dependent cleavage of peptide bonds with broad specificity.. With respect to regulation, allosterically activated by HslU binding. Protease subunit of a proteasome-like degradation complex believed to be a general protein degrading machinery. This Delftia acidovorans (strain DSM 14801 / SPH-1) protein is ATP-dependent protease subunit HslV.